The primary structure comprises 498 residues: Sugar transport protein 2 (498 aa).

The Cytoplasmic portion of the chain corresponds to 1–22 (MAVGSMNVEEGTKAFPAKLTGQ). Helical transmembrane passes span 23–43 (VFLC…DIGI), 80–100 (LLQL…FISS), 117–137 (IFFL…MLIG), 140–160 (ILLG…ISEI), 167–187 (GGLN…ASYV), 200–220 (YSLG…FFIH), 288–308 (LQFF…PVLF), 320–340 (ISTV…LLVV), 348–368 (LLME…GILL), 381–401 (AVPL…AWSW), 421–441 (GYFC…QFFL), and 450–470 (LLFF…VFFL). Topologically, residues 471 to 498 (PETKGVPIEEMAEKRWKTHPRWKKYFKD) are cytoplasmic.

It belongs to the major facilitator superfamily. Sugar transporter (TC 2.A.1.1) family. As to expression, pollen specific (at protein level).

The protein localises to the membrane. Its function is as follows. Mediates an active uptake of hexoses, probably by sugar/hydrogen symport. Can transport glucose, 3-O-methylglucose, xylose, mannose, fructose and galactose. The chain is Sugar transport protein 2 (STP2) from Arabidopsis thaliana (Mouse-ear cress).